Consider the following 374-residue polypeptide: MLTIIADSNIAHLHDYFNEQTLNHPIQVISMAGRDITADALQQYQPDVLLIRSVTQIDAKLLDTNQSVKFIGSATIGTDHVNEGYVSLRGMRFVNAAGCSKHSVAQYVMSAILQLRPEYWASNTSQSDKPVKLGIIGLGNIGSTLARYALDLGWEVLGYDPFQSASVINNASVEKVLAQSDVISLHVPLTLTGHSELPTYHMIDADALAKMPSTTMLINTSRGAVVSEADLLADLNQNPERQVVLDVFENEPTVSAELLDKLTLATPHIAGYTLEGKLRGTQMIFDAFVRSYGEKGADILSIKETDLMADLLPDNPYQWQQLKANPQKLAEFYDIKADDRQLRDSVNEQAGAVLGTDFDALRKNYTLRREWLFD.

Residues Ser53 and Thr75 each contribute to the substrate site. Asp160 is a binding site for NAD(+). Residue Arg222 is part of the active site. Asp246 lines the NAD(+) pocket. Glu251 is an active-site residue. His268 functions as the Proton donor in the catalytic mechanism. NAD(+) is bound at residue Gly271. Tyr272 provides a ligand contact to substrate.

Belongs to the D-isomer specific 2-hydroxyacid dehydrogenase family. PdxB subfamily. In terms of assembly, homodimer.

The protein resides in the cytoplasm. It catalyses the reaction 4-phospho-D-erythronate + NAD(+) = (R)-3-hydroxy-2-oxo-4-phosphooxybutanoate + NADH + H(+). It participates in cofactor biosynthesis; pyridoxine 5'-phosphate biosynthesis; pyridoxine 5'-phosphate from D-erythrose 4-phosphate: step 2/5. Catalyzes the oxidation of erythronate-4-phosphate to 3-hydroxy-2-oxo-4-phosphonooxybutanoate. The chain is Erythronate-4-phosphate dehydrogenase from Psychrobacter sp. (strain PRwf-1).